Here is a 319-residue protein sequence, read N- to C-terminus: ATP-dependent 6-phosphofructokinase (319 aa).

Glycine 11 provides a ligand contact to ATP. Position 21–25 (21–25 (RAVAR)) interacts with ADP. ATP contacts are provided by residues 72–73 (RY) and 102–105 (GDGS). Position 103 (aspartate 103) interacts with Mg(2+). 125–127 (TID) serves as a coordination point for substrate. The Proton acceptor role is filled by aspartate 127. Arginine 154 contributes to the ADP binding site. Residues arginine 162 and 169–171 (MGR) each bind substrate. Residues 185–187 (GAE) and arginine 211 each bind ADP. Substrate-binding positions include glutamate 222, arginine 243, and 249-252 (HIVR).

Belongs to the phosphofructokinase type A (PFKA) family. ATP-dependent PFK group I subfamily. Prokaryotic clade 'B1' sub-subfamily. Homotetramer. It depends on Mg(2+) as a cofactor.

The protein localises to the cytoplasm. It carries out the reaction beta-D-fructose 6-phosphate + ATP = beta-D-fructose 1,6-bisphosphate + ADP + H(+). It functions in the pathway carbohydrate degradation; glycolysis; D-glyceraldehyde 3-phosphate and glycerone phosphate from D-glucose: step 3/4. Its activity is regulated as follows. Allosterically activated by ADP and other diphosphonucleosides, and allosterically inhibited by phosphoenolpyruvate. Its function is as follows. Catalyzes the phosphorylation of D-fructose 6-phosphate to fructose 1,6-bisphosphate by ATP, the first committing step of glycolysis. In Lacticaseibacillus casei (strain BL23) (Lactobacillus casei), this protein is ATP-dependent 6-phosphofructokinase.